Reading from the N-terminus, the 316-residue chain is Metal cation efflux system protein CzcD (316 aa).

Topologically, residues 1–16 (MGAGHSHDHPGGNERS) are cytoplasmic. The chain crosses the membrane as a helical span at residues 17 to 37 (LKIALALTGTFLIAEVVGGVM). Residues 38–46 (TKSLALISD) lie on the Periplasmic side of the membrane. The chain crosses the membrane as a helical span at residues 47 to 67 (AAHMLTDTVALAIALAAIAIA). At 68–81 (KRPADKKRTFGYYR) the chain is on the cytoplasmic side. The helical transmembrane segment at 82–102 (FEILAAAFNALLLFGVAIYIL) threads the bilayer. Residues 103–114 (YEAYLRLKSPPQ) are Periplasmic-facing. Residues 115–135 (IESTGMFVVAVLGLIINLISM) traverse the membrane as a helical segment. The Cytoplasmic segment spans residues 136–151 (RMLSSGQSSSLNVKGA). 2 helical membrane-spanning segments follow: residues 152 to 172 (YLEV…AIII) and 174 to 194 (FTGW…WVLP). The Cytoplasmic portion of the chain corresponds to 195-316 (RTWILLKSSL…GSKSLAAGGN (122 aa)).

It belongs to the cation diffusion facilitator (CDF) transporter (TC 2.A.4) family. SLC30A subfamily.

It is found in the cell inner membrane. With respect to regulation, efflux is inhibited by FCCP. In terms of biological role, mediates a low-level metal ion resistance, probably by efflux of cations from the cytoplasm into the periplasm. Also mediates resistance to cobalt, cadmium and zinc via regulation of the Czc system. May repress expression of the Czc system by an export of the inducing cations. Binds and transports zinc. Can also bind cobalt, copper and nickel. The chain is Metal cation efflux system protein CzcD (czcD) from Cupriavidus metallidurans (strain ATCC 43123 / DSM 2839 / NBRC 102507 / CH34) (Ralstonia metallidurans).